The chain runs to 199 residues: Thioredoxin reductase-like selenoprotein T (199 aa).

Residues 1–24 form the signal peptide; sequence MRAAGLGLGIGLLLLAALAGPGGS. The cysteinyl-selenocysteine (Cys-Sec) cross-link spans 50-53; the sequence is CVSU. Residue Sec-53 is a non-standard amino acid, selenocysteine. The helical transmembrane segment at 95-115 threads the bilayer; sequence VFKLVLIGLIIVGKDPFAFFG.

It belongs to the SelWTH family. Selenoprotein T subfamily. In terms of processing, may contain a selenide-sulfide bond between Cys-50 and Sec-53. This bond is speculated to serve as redox-active pair.

It localises to the endoplasmic reticulum membrane. The enzyme catalyses [thioredoxin]-dithiol + NADP(+) = [thioredoxin]-disulfide + NADPH + H(+). Its function is as follows. Selenoprotein with thioredoxin reductase-like oxidoreductase activity. The protein is Thioredoxin reductase-like selenoprotein T of Gallus gallus (Chicken).